The sequence spans 702 residues: Polyribonucleotide nucleotidyltransferase 1 (702 aa).

2 residues coordinate Mg(2+): Asp483 and Asp489. Residues 550–609 (PQVTKLKVHPDKVREVIGAGGKVINKIIDETGVKINIENDGTIYIAAPDQESARVALEMI) form the KH domain. The region spanning 619 to 687 (GEVYTGKVIK…PQGKIGLSRK (69 aa)) is the S1 motif domain.

Belongs to the polyribonucleotide nucleotidyltransferase family. Requires Mg(2+) as cofactor.

It is found in the cytoplasm. It catalyses the reaction RNA(n+1) + phosphate = RNA(n) + a ribonucleoside 5'-diphosphate. Its function is as follows. Involved in mRNA degradation. Catalyzes the phosphorolysis of single-stranded polyribonucleotides processively in the 3'- to 5'-direction. This Alkaliphilus metalliredigens (strain QYMF) protein is Polyribonucleotide nucleotidyltransferase 1.